Consider the following 141-residue polypeptide: Hemoglobin subunit alpha (141 aa).

One can recognise a Globin domain in the interval 1-141; the sequence is VLSSKDKANI…VSTVLTSKYR (141 aa). Serine 3 carries the phosphoserine modification. 2 positions are modified to N6-succinyllysine: lysine 7 and lysine 11. The residue at position 16 (lysine 16) is an N6-acetyllysine; alternate. At lysine 16 the chain carries N6-succinyllysine; alternate. Tyrosine 24 bears the Phosphotyrosine mark. An N6-succinyllysine modification is found at lysine 40. A Phosphoserine modification is found at serine 49. Residue histidine 58 coordinates O2. A heme b-binding site is contributed by histidine 87. Phosphoserine is present on serine 102. At threonine 108 the chain carries Phosphothreonine. At serine 124 the chain carries Phosphoserine. Residues threonine 134 and threonine 137 each carry the phosphothreonine modification. Serine 138 bears the Phosphoserine mark.

Belongs to the globin family. Heterotetramer of two alpha chains and two beta chains. Red blood cells.

Its function is as follows. Involved in oxygen transport from the lung to the various peripheral tissues. In terms of biological role, hemopressin acts as an antagonist peptide of the cannabinoid receptor CNR1. Hemopressin-binding efficiently blocks cannabinoid receptor CNR1 and subsequent signaling. The protein is Hemoglobin subunit alpha (HBA) of Lama glama (Llama).